Reading from the N-terminus, the 214-residue chain is UPF0725 protein At1g19565 (214 aa).

The disordered stretch occupies residues 56 to 92 (EEEYEPSLPSSESPTDSCHADHESPDSPKYQQPAPGE).

It belongs to the UPF0725 (EMB2204) family.

In Arabidopsis thaliana (Mouse-ear cress), this protein is UPF0725 protein At1g19565.